An 84-amino-acid chain; its full sequence is MNLFDFFRERKKQSSASIAKERLQIIVAHERGQRSAPDYLPDLQKELIEVIRKYVNIDNDQVQVVLEDQGNCSILELNVTLPDR.

This sequence belongs to the MinE family.

Functionally, prevents the cell division inhibition by proteins MinC and MinD at internal division sites while permitting inhibition at polar sites. This ensures cell division at the proper site by restricting the formation of a division septum at the midpoint of the long axis of the cell. This Azotobacter vinelandii (strain DJ / ATCC BAA-1303) protein is Cell division topological specificity factor.